Reading from the N-terminus, the 398-residue chain is 1-deoxy-D-xylulose 5-phosphate reductoisomerase (398 aa).

Threonine 10, glycine 11, serine 12, valine 13, glycine 36, arginine 37, asparagine 38, and asparagine 124 together coordinate NADPH. Residue lysine 125 participates in 1-deoxy-D-xylulose 5-phosphate binding. Glutamate 126 contributes to the NADPH binding site. Aspartate 150 contributes to the Mn(2+) binding site. Positions 151, 152, 186, and 209 each coordinate 1-deoxy-D-xylulose 5-phosphate. Glutamate 152 serves as a coordination point for Mn(2+). Glycine 215 provides a ligand contact to NADPH. The 1-deoxy-D-xylulose 5-phosphate site is built by serine 222, asparagine 227, lysine 228, and glutamate 231. Mn(2+) is bound at residue glutamate 231.

The protein belongs to the DXR family. As to quaternary structure, homodimer. Mg(2+) is required as a cofactor. Requires Mn(2+) as cofactor.

The catalysed reaction is 2-C-methyl-D-erythritol 4-phosphate + NADP(+) = 1-deoxy-D-xylulose 5-phosphate + NADPH + H(+). The protein operates within isoprenoid biosynthesis; isopentenyl diphosphate biosynthesis via DXP pathway; isopentenyl diphosphate from 1-deoxy-D-xylulose 5-phosphate: step 1/6. In terms of biological role, catalyzes the NADPH-dependent rearrangement and reduction of 1-deoxy-D-xylulose-5-phosphate (DXP) to 2-C-methyl-D-erythritol 4-phosphate (MEP). The chain is 1-deoxy-D-xylulose 5-phosphate reductoisomerase from Serratia proteamaculans (strain 568).